The chain runs to 318 residues: Protein-L-histidine N-pros-methyltransferase (318 aa).

An N-terminal signal peptide occupies residues 1-18 (MRLLAGWLCLSLASVWLA). Residue Asn35 is glycosylated (N-linked (GlcNAc...) asparagine). S-adenosyl-L-homocysteine-binding residues include Glu174, Asn210, and Tyr295.

It belongs to the METTL9 family.

It is found in the endoplasmic reticulum. The protein localises to the mitochondrion. The catalysed reaction is L-histidyl-[protein] + S-adenosyl-L-methionine = N(pros)-methyl-L-histidyl-[protein] + S-adenosyl-L-homocysteine + H(+). Its function is as follows. Protein-histidine N-methyltransferase that specifically catalyzes 1-methylhistidine (pros-methylhistidine) methylation of target proteins. Specifically methylates the second His of proteins with a His-x-His (HxH) motif (where 'x' is preferably a small amino acid), while exploiting the first one as a recognition signature. Catalyzes methylation of target proteins such as S100A9, NDUFB3, SLC39A5, SLC39A7, ARMC6 and DNAJB12; 1-methylhistidine modification may affect the binding of zinc and other metals to its target proteins. Constitutes the main methyltransferase for the 1-methylhistidine modification in cell. This chain is Protein-L-histidine N-pros-methyltransferase, found in Bos taurus (Bovine).